The sequence spans 128 residues: Nanos homolog 1 (128 aa).

An essential for its translational repressor activity region spans residues 7-23 (FNSWSDYLGLSSLISRG). The tract at residues 23 to 58 (GLQPREGGESPRPRWKASSPTPAEPLPSKAAEAHGH) is disordered. A Nanos-type zinc finger spans residues 60-114 (GCGFCRSNREAQSLYSSHRLRAPDGRVLCPVLRGYTCPLCGANGDWAHTMRYCPL). The Zn(2+) site is built by C61, C64, H77, C88, C96, C99, H107, and C112. 2 consecutive short sequence motifs (C2HC) follow at residues 61-88 (CGFC…RVLC) and 96-112 (CPLC…MRYC).

It belongs to the nanos family. In terms of assembly, interacts with ccnb1.

It is found in the cytoplasm. The protein localises to the perinuclear region. In terms of biological role, acts as a translational repressor. Can mediate repression affecting different steps in the translation process: cap-driven, IRES-driven, polyadenylated RNAs or nonpolyadenylated RNAs. Essential for the development of primordial germ cells (PGCs) by ensuring their proper migration and survival. This Xenopus tropicalis (Western clawed frog) protein is Nanos homolog 1 (nanos1).